A 173-amino-acid polypeptide reads, in one-letter code: Archaemetzincin (173 aa).

Position 130 (His-130) interacts with Zn(2+). Residue Glu-131 is the Proton acceptor of the active site. Zn(2+) is bound by residues His-134, His-140, Cys-141, Cys-146, Cys-165, and Cys-168.

This sequence belongs to the peptidase M54 family. As to quaternary structure, monomer. Zn(2+) is required as a cofactor.

Probable zinc metalloprotease whose natural substrate is unknown. The sequence is that of Archaemetzincin from Natronomonas pharaonis (strain ATCC 35678 / DSM 2160 / CIP 103997 / JCM 8858 / NBRC 14720 / NCIMB 2260 / Gabara) (Halobacterium pharaonis).